The sequence spans 448 residues: Trigger factor (448 aa).

In terms of domain architecture, PPIase FKBP-type spans 167–253; the sequence is GSIVRVDFVE…VKDIKRRDIP (87 aa).

It belongs to the FKBP-type PPIase family. Tig subfamily.

The protein resides in the cytoplasm. It catalyses the reaction [protein]-peptidylproline (omega=180) = [protein]-peptidylproline (omega=0). Involved in protein export. Acts as a chaperone by maintaining the newly synthesized protein in an open conformation. Functions as a peptidyl-prolyl cis-trans isomerase. The protein is Trigger factor of Borrelia recurrentis (strain A1).